Consider the following 408-residue polypeptide: Zinc chaperone AztD (408 aa).

Positions 1-21 (MLRHLAGASALALTLAGAGFA) are cleaved as a signal peptide. The N-terminal Zn(2+)-binding motif; binds a third Zn(2+) with low affinity motif lies at 23–29 (DHDHDHE). Zn(2+) is bound by residues His-99, His-102, Asp-104, His-124, His-167, His-218, and His-408. A disulfide bridge links Cys-214 with Cys-231.

As to quaternary structure, monomer.

It is found in the periplasm. In terms of biological role, acts as a zinc chaperone in the AztABCD zinc transport system. Directly transfers one zinc cation to the solute binding protein AztC; the transfer occurs without the formation of a stable interaction. Binds 3 Zn(2+), two with high affinity and one with low affinity, and transfers only Zn(2+) bound to site 2 to AztC. Likely functions to store zinc in the periplasm and may be important for zinc accumulation in zinc-limited environments. The sequence is that of Zinc chaperone AztD from Paracoccus denitrificans (strain Pd 1222).